The chain runs to 361 residues: Glutamine synthetase (361 aa).

Residues Cys23 to Lys103 form the GS beta-grasp domain. Positions Gln110 to Gln361 constitute a GS catalytic domain. An ATP-binding site is contributed by Glu131. Glu131, Glu133, and Glu200 together coordinate Mn(2+). Glu200–Pro205 is a binding site for ATP. Residue Asp243 to Trp244 participates in L-glutamate binding. His250 is a binding site for Mn(2+). Residues Asn252 to Ser254, Arg316, and Arg321 contribute to the ATP site. Arg316 lines the L-glutamate pocket. Residue Tyr333–Glu335 participates in ADP binding. Residue Glu335 coordinates Mn(2+). Residue Arg337 coordinates L-glutamate.

This sequence belongs to the glutamine synthetase family. Requires Mg(2+) as cofactor. It depends on Mn(2+) as a cofactor.

It is found in the cytoplasm. The protein localises to the cytosol. It localises to the microsome. Its subcellular location is the mitochondrion. The enzyme catalyses L-glutamate + NH4(+) + ATP = L-glutamine + ADP + phosphate + H(+). In terms of biological role, glutamine synthetase that catalyzes the ATP-dependent conversion of glutamate and ammonia to glutamine. This Panulirus argus (Caribbean spiny lobster) protein is Glutamine synthetase.